The chain runs to 84 residues: Delta-thalatoxin-Cad1a (84 aa).

The first 19 residues, 1–19 (MAYLKIVLVALMLVLAVSA), serve as a signal peptide directing secretion. Positions 20–33 (MRRPDQQDQDISVA) are excised as a propeptide. Cystine bridges form between cysteine 38–cysteine 78, cysteine 40–cysteine 68, and cysteine 61–cysteine 79.

Belongs to the sea anemone sodium channel inhibitory toxin family. Type II subfamily.

Its subcellular location is the secreted. It localises to the nematocyst. Binds specifically to the voltage-gated sodium channel (Nav) and delays its inactivation. The protein is Delta-thalatoxin-Cad1a of Cryptodendrum adhaesivum (Adhesive sea anemone).